Reading from the N-terminus, the 113-residue chain is Phosphorelay protein LuxU (113 aa).

The 96-residue stretch at 18-113 folds into the HPt domain; the sequence is GEENVPILVN…THQCYSDLVH (96 aa). His-57 bears the Phosphohistidine mark.

In terms of assembly, monomer.

In terms of biological role, phosphorelay protein which receives sensory signals from a sensory kinase and transmit them to LuxO. At low cell density, a phosphoryl group is transferred from the sensory kinase, probably on His-57 and this phosphoryl group is further transferred to LuxO. The sequence is that of Phosphorelay protein LuxU (luxU) from Vibrio cholerae serotype O1 (strain ATCC 39315 / El Tor Inaba N16961).